A 335-amino-acid polypeptide reads, in one-letter code: Beta-ketoacyl-[acyl-carrier-protein] synthase III (335 aa).

Catalysis depends on residues Cys116 and His256. Positions 257 to 261 (QANLR) are ACP-binding. Asn286 is an active-site residue.

It belongs to the thiolase-like superfamily. FabH family. In terms of assembly, homodimer.

It is found in the cytoplasm. The enzyme catalyses malonyl-[ACP] + acetyl-CoA + H(+) = 3-oxobutanoyl-[ACP] + CO2 + CoA. It participates in lipid metabolism; fatty acid biosynthesis. In terms of biological role, catalyzes the condensation reaction of fatty acid synthesis by the addition to an acyl acceptor of two carbons from malonyl-ACP. Catalyzes the first condensation reaction which initiates fatty acid synthesis and may therefore play a role in governing the total rate of fatty acid production. Possesses both acetoacetyl-ACP synthase and acetyl transacylase activities. Its substrate specificity determines the biosynthesis of branched-chain and/or straight-chain of fatty acids. The polypeptide is Beta-ketoacyl-[acyl-carrier-protein] synthase III (Porphyromonas gingivalis (strain ATCC BAA-308 / W83)).